Consider the following 478-residue polypeptide: NADH oxidase (478 aa).

FAD is bound by residues 8 to 12 (GINHA), Asp33, Cys43, Val80, 111 to 114 (ASGA), Lys149, and Tyr177. The Proton acceptor role is filled by His11. The active-site Redox-active is Cys43. A Cysteine sulfinic acid (-SO2H) modification is found at Cys43. Residues 170–185 (VAIV…LAEA), Asp197, and Gly264 each bind NAD(+). FAD-binding positions include 295-305 (LNHKDVYVIGG), Leu322, Ala323, and Thr324. Ala353 contacts NAD(+). Phe450 contacts FAD.

The protein belongs to the class-III pyridine nucleotide-disulfide oxidoreductase family. It depends on FAD as a cofactor.

The enzyme catalyses 2 NADH + O2 + 2 H(+) = 2 NAD(+) + 2 H2O. In terms of biological role, catalyzes the four-electron reduction of molecular oxygen to water. The chain is NADH oxidase (nox) from Mycoplasma genitalium (strain ATCC 33530 / DSM 19775 / NCTC 10195 / G37) (Mycoplasmoides genitalium).